The sequence spans 50 residues: Photosystem II reaction center protein K (50 aa).

Residues 1–13 (MLNLNFTNITVMG) constitute a propeptide that is removed on maturation. Residues 25-45 (IVDILPIIPILFFLLAFVWQA) traverse the membrane as a helical segment.

It belongs to the PsbK family. In terms of assembly, PSII is composed of 1 copy each of membrane proteins PsbA, PsbB, PsbC, PsbD, PsbE, PsbF, PsbH, PsbI, PsbJ, PsbK, PsbL, PsbM, PsbT, PsbY, PsbZ, Psb30/Ycf12, at least 3 peripheral proteins of the oxygen-evolving complex and a large number of cofactors. It forms dimeric complexes.

Its subcellular location is the plastid. It localises to the chloroplast thylakoid membrane. In terms of biological role, one of the components of the core complex of photosystem II (PSII). PSII is a light-driven water:plastoquinone oxidoreductase that uses light energy to abstract electrons from H(2)O, generating O(2) and a proton gradient subsequently used for ATP formation. It consists of a core antenna complex that captures photons, and an electron transfer chain that converts photonic excitation into a charge separation. This Euglena myxocylindracea protein is Photosystem II reaction center protein K.